Consider the following 450-residue polypeptide: Tubulin alpha chain (450 aa).

Glutamine 11 is a GTP binding site. Position 40 is an N6-acetyllysine (lysine 40). GTP contacts are provided by glutamate 71, serine 140, glycine 144, threonine 145, threonine 179, asparagine 206, and asparagine 228. Glutamate 71 provides a ligand contact to Mg(2+). Glutamate 254 is a catalytic residue.

It belongs to the tubulin family. Dimer of alpha and beta chains. A typical microtubule is a hollow water-filled tube with an outer diameter of 25 nm and an inner diameter of 15 nM. Alpha-beta heterodimers associate head-to-tail to form protofilaments running lengthwise along the microtubule wall with the beta-tubulin subunit facing the microtubule plus end conferring a structural polarity. Microtubules usually have 13 protofilaments but different protofilament numbers can be found in some organisms and specialized cells. It depends on Mg(2+) as a cofactor. Post-translationally, undergoes a tyrosination/detyrosination cycle, the cyclic removal and re-addition of a C-terminal tyrosine residue by the enzymes tubulin tyrosine carboxypeptidase (TTCP) and tubulin tyrosine ligase (TTL), respectively. Acetylation of alpha chains at Lys-40 stabilizes microtubules and affects affinity and processivity of microtubule motors. This modification has a role in multiple cellular functions, ranging from cell motility, cell cycle progression or cell differentiation to intracellular trafficking and signaling.

The protein resides in the cytoplasm. The protein localises to the cytoskeleton. It carries out the reaction GTP + H2O = GDP + phosphate + H(+). Tubulin is the major constituent of microtubules, a cylinder consisting of laterally associated linear protofilaments composed of alpha- and beta-tubulin heterodimers. Microtubules grow by the addition of GTP-tubulin dimers to the microtubule end, where a stabilizing cap forms. Below the cap, tubulin dimers are in GDP-bound state, owing to GTPase activity of alpha-tubulin. In Haemonchus contortus (Barber pole worm), this protein is Tubulin alpha chain.